Consider the following 271-residue polypeptide: Type III pantothenate kinase (271 aa).

6 to 13 contacts ATP; the sequence is DVRNTHTV. 109 to 112 contributes to the substrate binding site; that stretch reads GADR. Catalysis depends on D111, which acts as the Proton acceptor. Residue D131 coordinates K(+). An ATP-binding site is contributed by S134. Residue T186 participates in substrate binding.

The protein belongs to the type III pantothenate kinase family. As to quaternary structure, homodimer. NH4(+) serves as cofactor. Requires K(+) as cofactor.

The protein resides in the cytoplasm. It catalyses the reaction (R)-pantothenate + ATP = (R)-4'-phosphopantothenate + ADP + H(+). It functions in the pathway cofactor biosynthesis; coenzyme A biosynthesis; CoA from (R)-pantothenate: step 1/5. Its function is as follows. Catalyzes the phosphorylation of pantothenate (Pan), the first step in CoA biosynthesis. This is Type III pantothenate kinase from Mycobacteroides abscessus (strain ATCC 19977 / DSM 44196 / CCUG 20993 / CIP 104536 / JCM 13569 / NCTC 13031 / TMC 1543 / L948) (Mycobacterium abscessus).